A 212-amino-acid chain; its full sequence is ER lumen protein-retaining receptor 1 (212 aa).

Over 1 to 4 (MNLF) the chain is Lumenal. A helical transmembrane segment spans residues 5 to 24 (RFLGDLSHLLAIILLLLKIW). Residues 25–32 (KSRSCAGI) lie on the Cytoplasmic side of the membrane. The helical transmembrane segment at 33–52 (SGKSQVLFAVVFTARYLDLF) threads the bilayer. The interaction with the K-D-E-L motif on target proteins stretch occupies residues 47-48 (RY). The Lumenal segment spans residues 53-58 (TNYISL). Residues 59–79 (YNTCMKVVYIACSFTTVWMIY) traverse the membrane as a helical segment. The Cytoplasmic segment spans residues 80-92 (SKFKATYDGNHDT). Residues 93-110 (FRVEFLVVPTAILAFLVN) form a helical membrane-spanning segment. Over 111-116 (HDFTPL) the chain is Lumenal. Residues 117–135 (EILWTFSIYLESVAILPQL) traverse the membrane as a helical segment. Topologically, residues 136 to 149 (FMVSKTGEAETITS) are cytoplasmic. A helical membrane pass occupies residues 150–168 (HYLFALGVYRTLYLFNWIW). The interaction with the K-D-E-L motif on target proteins stretch occupies residues 159–169 (RTLYLFNWIWR). Over 169 to 178 (RYHFEGFFDL) the chain is Lumenal. A helical membrane pass occupies residues 179-199 (IAIVAGLVQTVLYCDFFYLYI). The Cytoplasmic segment spans residues 200–212 (TKVLKGKKLSLPA). Residues 204–207 (KGKK) are important for recycling of cargo proteins with the sequence motif K-D-E-L from the Golgi to the endoplasmic reticulum. Phosphoserine; by PKA is present on Ser-209.

The protein belongs to the ERD2 family. In terms of assembly, upon ligand binding the receptor oligomerizes and interacts with components of the transport machinery such as ARFGAP1 and ARF1. Phosphorylation by PKA at Ser-209 is required for endoplasmic reticulum retention function.

It localises to the golgi apparatus membrane. It is found in the cytoplasmic vesicle. The protein resides in the COPI-coated vesicle membrane. Its subcellular location is the endoplasmic reticulum membrane. The protein localises to the endoplasmic reticulum-Golgi intermediate compartment membrane. Receptor for the C-terminal sequence motif K-D-E-L that is present on endoplasmic reticulum resident proteins and that mediates their recycling from the Golgi back to the endoplasmic reticulum. The chain is ER lumen protein-retaining receptor 1 (Kdelr1) from Mus musculus (Mouse).